A 215-amino-acid chain; its full sequence is Orotate phosphoribosyltransferase (215 aa).

5-phospho-alpha-D-ribose 1-diphosphate is bound at residue K26. 34-35 (FF) contacts orotate. 5-phospho-alpha-D-ribose 1-diphosphate is bound by residues 72–73 (YK), R99, K100, K103, H105, and 125–133 (DDVISSGIS). Orotate contacts are provided by S129 and R157.

This sequence belongs to the purine/pyrimidine phosphoribosyltransferase family. PyrE subfamily. In terms of assembly, homodimer. Mg(2+) serves as cofactor.

The catalysed reaction is orotidine 5'-phosphate + diphosphate = orotate + 5-phospho-alpha-D-ribose 1-diphosphate. It participates in pyrimidine metabolism; UMP biosynthesis via de novo pathway; UMP from orotate: step 1/2. Its function is as follows. Catalyzes the transfer of a ribosyl phosphate group from 5-phosphoribose 1-diphosphate to orotate, leading to the formation of orotidine monophosphate (OMP). This chain is Orotate phosphoribosyltransferase, found in Halorhodospira halophila (strain DSM 244 / SL1) (Ectothiorhodospira halophila (strain DSM 244 / SL1)).